The sequence spans 561 residues: DNA ligase B (561 aa).

Lysine 124 acts as the N6-AMP-lysine intermediate in catalysis.

The protein belongs to the NAD-dependent DNA ligase family. LigB subfamily.

It carries out the reaction NAD(+) + (deoxyribonucleotide)n-3'-hydroxyl + 5'-phospho-(deoxyribonucleotide)m = (deoxyribonucleotide)n+m + AMP + beta-nicotinamide D-nucleotide.. Functionally, catalyzes the formation of phosphodiester linkages between 5'-phosphoryl and 3'-hydroxyl groups in double-stranded DNA using NAD as a coenzyme and as the energy source for the reaction. The sequence is that of DNA ligase B from Cronobacter sakazakii (strain ATCC BAA-894) (Enterobacter sakazakii).